The sequence spans 240 residues: MAVSFLQSLFSVFRKKSSPQEPATTTAGGPAKRTKLTVGELQEFAPEWIVIGLGNPGAKYADTRHNIGYWPIDRLVERYEAQWLPVEGQKAHAALITVEETPVLLLRSTTYMNNSGEAVGPLASALSLPAERIIVCHDELDIAAGQVRIKDKGGEGGHNGLRSMTAELGTQHYVRVRMGIGRPPKGTSVIDFVLSPFEEADIDAENGWMENTLRDSVDSVTLIVNNGTDIARNDIHTRKH.

A tRNA-binding site is contributed by Tyr-60. His-65 functions as the Proton acceptor in the catalytic mechanism. TRNA contacts are provided by Tyr-111, Asn-113, and Asn-159.

Belongs to the PTH family. Monomer.

It localises to the cytoplasm. The enzyme catalyses an N-acyl-L-alpha-aminoacyl-tRNA + H2O = an N-acyl-L-amino acid + a tRNA + H(+). Its function is as follows. Hydrolyzes ribosome-free peptidyl-tRNAs (with 1 or more amino acids incorporated), which drop off the ribosome during protein synthesis, or as a result of ribosome stalling. Functionally, catalyzes the release of premature peptidyl moieties from peptidyl-tRNA molecules trapped in stalled 50S ribosomal subunits, and thus maintains levels of free tRNAs and 50S ribosomes. This chain is Peptidyl-tRNA hydrolase 2, found in Corynebacterium jeikeium (strain K411).